The chain runs to 220 residues: Protein myomaker (220 aa).

Met1 is a topological domain (extracellular). A helical membrane pass occupies residues Gly2–Ala22. The Cytoplasmic portion of the chain corresponds to Ser23–Tyr37. Residues Phe38–Leu58 traverse the membrane as a helical segment. The Extracellular portion of the chain corresponds to Cys59–Asp64. Residues Ile65–Leu85 form a helical membrane-spanning segment. Topologically, residues Gly86 to Arg93 are cytoplasmic. The helical transmembrane segment at Ser94–Gln110 threads the bilayer. Over Asp111–Arg112 the chain is Extracellular. A helical membrane pass occupies residues Leu113–Trp133. The Cytoplasmic segment spans residues Leu134–Gln153. A helical transmembrane segment spans residues Val154–Trp174. A topological domain (extracellular) is located at residue Asp175. Residues Tyr176–Pro196 form a helical membrane-spanning segment. The Cytoplasmic segment spans residues Lys197–Val220.

The protein belongs to the TMEM8 family.

The protein resides in the cell membrane. Its function is as follows. Myoblast-specific protein that mediates myoblast fusion, an essential step for the formation of multi-nucleated muscle fibers. Actively participates in the membrane fusion reaction by mediating the mixing of cell membrane lipids (hemifusion) upstream of mymx. The chain is Protein myomaker from Danio rerio (Zebrafish).